Consider the following 440-residue polypeptide: UPF0761 membrane protein Rru_A2625 (440 aa).

7 helical membrane-spanning segments follow: residues 29-49, 61-81, 117-137, 157-177, 201-221, 224-244, and 264-284; these read ILATAGSFTILVLRALITHDI, LLALVPLIAIALAILAAFPGF, GLTALGVAGLTLTAIILLLTI, LLVYWSVLTGGPLLMGLSFSL, PTLGPPLLSLTAMTLLYMLVP, PVPLFHALAGALVATLASALL, and ALAALPAFLVWMYLSWAVVLM.

It belongs to the UPF0761 family.

It localises to the cell inner membrane. This chain is UPF0761 membrane protein Rru_A2625, found in Rhodospirillum rubrum (strain ATCC 11170 / ATH 1.1.1 / DSM 467 / LMG 4362 / NCIMB 8255 / S1).